Here is a 302-residue protein sequence, read N- to C-terminus: Sulfate adenylyltransferase subunit 2 (302 aa).

This sequence belongs to the PAPS reductase family. CysD subfamily. In terms of assembly, heterodimer composed of CysD, the smaller subunit, and CysN.

The enzyme catalyses sulfate + ATP + H(+) = adenosine 5'-phosphosulfate + diphosphate. It functions in the pathway sulfur metabolism; hydrogen sulfide biosynthesis; sulfite from sulfate: step 1/3. In terms of biological role, with CysN forms the ATP sulfurylase (ATPS) that catalyzes the adenylation of sulfate producing adenosine 5'-phosphosulfate (APS) and diphosphate, the first enzymatic step in sulfur assimilation pathway. APS synthesis involves the formation of a high-energy phosphoric-sulfuric acid anhydride bond driven by GTP hydrolysis by CysN coupled to ATP hydrolysis by CysD. The polypeptide is Sulfate adenylyltransferase subunit 2 (Photorhabdus laumondii subsp. laumondii (strain DSM 15139 / CIP 105565 / TT01) (Photorhabdus luminescens subsp. laumondii)).